Reading from the N-terminus, the 220-residue chain is Thiopurine S-methyltransferase (220 aa).

S-adenosyl-L-methionine-binding residues include W10, L45, E66, and R123.

This sequence belongs to the class I-like SAM-binding methyltransferase superfamily. TPMT family.

The protein resides in the cytoplasm. It carries out the reaction S-adenosyl-L-methionine + a thiopurine = S-adenosyl-L-homocysteine + a thiopurine S-methylether.. The chain is Thiopurine S-methyltransferase from Pseudomonas syringae pv. syringae (strain B728a).